Here is a 191-residue protein sequence, read N- to C-terminus: Probable DNA-directed RNA polymerase subunit delta (191 aa).

The HTH HARE-type domain occupies 14 to 83 (LSMIEVARAI…GENKWGLRSW (70 aa)). The tract at residues 119-191 (EDAIDYRDDD…EDEEDEEPVL (73 aa)) is disordered.

RNAP is composed of a core of 2 alpha, a beta and a beta' subunits. The core is associated with a delta subunit and one of several sigma factors.

Functionally, participates in both the initiation and recycling phases of transcription. In the presence of the delta subunit, RNAP displays an increased specificity of transcription, a decreased affinity for nucleic acids, and an increased efficiency of RNA synthesis because of enhanced recycling. This chain is Probable DNA-directed RNA polymerase subunit delta, found in Streptococcus pyogenes serotype M6 (strain ATCC BAA-946 / MGAS10394).